Here is a 245-residue protein sequence, read N- to C-terminus: tRNA1(Val) (adenine(37)-N6)-methyltransferase (245 aa).

Belongs to the methyltransferase superfamily. tRNA (adenine-N(6)-)-methyltransferase family.

The protein localises to the cytoplasm. It carries out the reaction adenosine(37) in tRNA1(Val) + S-adenosyl-L-methionine = N(6)-methyladenosine(37) in tRNA1(Val) + S-adenosyl-L-homocysteine + H(+). Functionally, specifically methylates the adenine in position 37 of tRNA(1)(Val) (anticodon cmo5UAC). The protein is tRNA1(Val) (adenine(37)-N6)-methyltransferase of Escherichia coli (strain SE11).